We begin with the raw amino-acid sequence, 342 residues long: Alpha-(1,3)-fucosyltransferase 7 (342 aa).

The Cytoplasmic portion of the chain corresponds to 1 to 14; that stretch reads MNNAGHGPTRRLRG. The helical; Signal-anchor for type II membrane protein transmembrane segment at 15–36 threads the bilayer; the sequence is LGVLAGVALLAALWLLWLLGSA. Over 37–342 the chain is Lumenal; it reads PRGTPAPQPT…YEDLEGWFQA (306 aa). Cysteines 68 and 76 form a disulfide. Asparagine 81 is a glycosylation site (N-linked (GlcNAc...) asparagine). Cysteine 211 and cysteine 214 are joined by a disulfide. A glycan (N-linked (GlcNAc...) asparagine) is linked at asparagine 291. Cysteine 318 and cysteine 321 are oxidised to a cystine.

It belongs to the glycosyltransferase 10 family. In terms of processing, N-glycosylated. In terms of tissue distribution, leukocytic/myeloid lineage cells.

The protein resides in the golgi apparatus. Its subcellular location is the golgi stack membrane. It carries out the reaction an N-acetyl-alpha-neuraminyl-(2-&gt;3)-beta-D-galactosyl-(1-&gt;4)-N-acetyl-beta-D-glucosaminyl derivative + GDP-beta-L-fucose = an alpha-Neu5Ac-(2-&gt;3)-beta-D-Gal-(1-&gt;4)-[alpha-L-Fuc-(1-&gt;3)]-beta-D-GlcNAc derivative + GDP + H(+). The enzyme catalyses a neolactoside IV(3)-alpha-NeuAc-nLc4Cer + GDP-beta-L-fucose = a neolactoside IV(3)-alpha-NeuNAc,III(3)-alpha-Fuc-nLc4Cer + GDP + H(+). The catalysed reaction is a neolactoside VI(3)-alpha-NeuNAc-nLc6Cer + GDP-beta-L-fucose = a neolactoside VI(3)-alpha-NeuAc,V(3)-alphaFuc-nLc6Cer + GDP + H(+). It catalyses the reaction an alpha-Neu5Ac-(2-&gt;3)-beta-D-Gal-(1-&gt;4)-beta-D-GlcNAc-(1-&gt;3)-beta-D-Gal-(1-&gt;4)-[alpha-L-Fuc-(1-&gt;3)]-beta-D-GlcNAc derivative + GDP-beta-L-fucose = an alpha-Neu5Ac-(2-&gt;3)-beta-D-Gal-(1-&gt;4)-[alpha-L-Fuc-(1-&gt;3)]-beta-D-GlcNAc-(1-&gt;3)-beta-D-Gal-(1-&gt;4)-[alpha-L-Fuc-(1-&gt;3)]-beta-D-GlcNAc derivative + GDP + H(+). It carries out the reaction an alpha-Neu5Ac-(2-&gt;3)-beta-D-Gal-(1-&gt;4)-beta-D-GlcNAc6S derivative + GDP-beta-L-fucose = an alpha-Neu5Ac-(2-&gt;3)-beta-D-Gal-(1-&gt;4)-[alpha-L-Fuc-(1-&gt;3)]-beta-D-GlcNAc6S derivative + GDP + H(+). The enzyme catalyses alpha-Neu5Ac-(2-&gt;3)-beta-D-Gal-(1-&gt;4)-beta-D-GlcNAc-(1-&gt;3)-beta-D-Gal-(1-&gt;4)-D-Glc + GDP-beta-L-fucose = alpha-Neu5Ac-(2-&gt;3)-beta-D-Gal-(1-&gt;4)-[alpha-L-Fuc-(1-&gt;3)]-beta-D-GlcNAc-(1-&gt;3)-beta-D-Gal-(1-&gt;4)-D-Glc + GDP + H(+). The catalysed reaction is alpha-Neu5Ac-(2-&gt;3)-beta-D-Gal-(1-&gt;4)-beta-D-GlcNAc-(1-&gt;3)-beta-D-Gal-(1-&gt;4)-[alpha-L-Fuc-(1-&gt;3)]-beta-D-GlcNAc-(1-&gt;3)-beta-D-Gal-(1-&gt;4)-beta-D-GlcNAc + GDP-beta-L-fucose = alpha-Neu5Ac-(2-&gt;3)-beta-D-Gal-(1-&gt;4)-[alpha-L-Fuc-(1-&gt;3)]-beta-D-GlcNAc-(1-&gt;3)-beta-D-Gal-(1-&gt;4)-[alpha-L-Fuc-(1-&gt;3)]-beta-D-GlcNAc-(1-&gt;3)-beta-D-Gal-(1-&gt;4)-beta-D-GlcNAc + GDP + H(+). It catalyses the reaction alpha-Neu5Ac-(2-&gt;3)-beta-D-Gal-(1-&gt;4)-beta-D-GlcNAc-(1-&gt;3)-beta-D-Gal-(1-&gt;4)-beta-D-GlcNAc-(1-&gt;3)-beta-D-Gal-(1-&gt;4)-beta-D-GlcNAc + GDP-beta-L-fucose = alpha-Neu5Ac-(2-&gt;3)-beta-D-Gal-(1-&gt;4)-[alpha-L-Fuc-(1-&gt;3)]-beta-D-GlcNAc-(1-&gt;3)-beta-D-Gal-(1-&gt;4)-beta-D-GlcNAc-(1-&gt;3)-beta-D-Gal-(1-&gt;4)-beta-D-GlcNAc + GDP + H(+). Its pathway is protein modification; protein glycosylation. Inhibited by NaCl. Inhibited by GDP in a concentration dependent manner, with an IC(50) value of 93 uM. Also inhibited by GMP and GTP. Inhibited by N-ethylmaleimide. Activated by poly(ethylene glycol) by enhancing the thermal stability of FUT7. Activated by Mn2+, Ca2+, and Mg2+. Both panosialin A and B inhibit activity with IC(50) values of 4.8 and 5.3 ug/ml, respectively. Inhibited by gallic acid (GA) and (-)-epigallocatechin gallate (EGCG) in a time-dependent and irreversible manner with IC(50) values of 60 and 700 nM, respectively. Catalyzes the transfer of L-fucose, from a guanosine diphosphate-beta-L-fucose, to the N-acetyl glucosamine (GlcNAc) of a distal alpha2,3 sialylated lactosamine unit of a glycoprotein or a glycolipid-linked sialopolylactosamines chain through an alpha-1,3 glycosidic linkage and participates in the final fucosylation step in the biosynthesis of the sialyl Lewis X (sLe(x)), a carbohydrate involved in cell and matrix adhesion during leukocyte trafficking and fertilization. In vitro, also synthesizes sialyl-dimeric-Lex structures, from VIM-2 structures and both di-fucosylated and trifucosylated structures from mono-fucosylated precursors. However does not catalyze alpha 1-3 fucosylation when an internal alpha 1-3 fucosylation is present in polylactosamine chain and the fucosylation rate of the internal GlcNAc residues is reduced once fucose has been added to the distal GlcNAc. Also catalyzes the transfer of a fucose from GDP-beta-fucose to the 6-sulfated a(2,3)sialylated substrate to produce 6-sulfo sLex mediating significant L-selectin-dependent cell adhesion. Through sialyl-Lewis(x) biosynthesis, can control SELE- and SELP-mediated cell adhesion with leukocytes and allows leukocytes tethering and rolling along the endothelial tissue thereby enabling the leukocytes to accumulate at a site of inflammation. May enhance embryo implantation through sialyl Lewis X (sLeX)-mediated adhesion of embryo cells to endometrium. May affect insulin signaling by up-regulating the phosphorylation and expression of some signaling molecules involved in the insulin-signaling pathway through SLe(x) which is present on the glycans of the INSRR alpha subunit. This Homo sapiens (Human) protein is Alpha-(1,3)-fucosyltransferase 7.